The sequence spans 86 residues: Small ribosomal subunit protein bS18 (86 aa).

The protein belongs to the bacterial ribosomal protein bS18 family. Part of the 30S ribosomal subunit. Forms a tight heterodimer with protein bS6.

Binds as a heterodimer with protein bS6 to the central domain of the 16S rRNA, where it helps stabilize the platform of the 30S subunit. This Herpetosiphon aurantiacus (strain ATCC 23779 / DSM 785 / 114-95) protein is Small ribosomal subunit protein bS18.